A 198-amino-acid chain; its full sequence is Holliday junction branch migration complex subunit RuvA (198 aa).

Residues 1–63 (MYDYIKGQLT…EDAHLLFGFH (63 aa)) form a domain I region. The interval 64–142 (TEDEKDVFLK…EAPQETGNTK (79 aa)) is domain II. Residues 143–147 (ARSNK) form a flexible linker region. The interval 148-198 (AGNTQLDEAIEALLALGYKAAELKKIRAFFEGTSETAEQYIKSALKLLMKG) is domain III.

Belongs to the RuvA family. Homotetramer. Forms an RuvA(8)-RuvB(12)-Holliday junction (HJ) complex. HJ DNA is sandwiched between 2 RuvA tetramers; dsDNA enters through RuvA and exits via RuvB. An RuvB hexamer assembles on each DNA strand where it exits the tetramer. Each RuvB hexamer is contacted by two RuvA subunits (via domain III) on 2 adjacent RuvB subunits; this complex drives branch migration. In the full resolvosome a probable DNA-RuvA(4)-RuvB(12)-RuvC(2) complex forms which resolves the HJ.

It is found in the cytoplasm. The RuvA-RuvB-RuvC complex processes Holliday junction (HJ) DNA during genetic recombination and DNA repair, while the RuvA-RuvB complex plays an important role in the rescue of blocked DNA replication forks via replication fork reversal (RFR). RuvA specifically binds to HJ cruciform DNA, conferring on it an open structure. The RuvB hexamer acts as an ATP-dependent pump, pulling dsDNA into and through the RuvAB complex. HJ branch migration allows RuvC to scan DNA until it finds its consensus sequence, where it cleaves and resolves the cruciform DNA. The sequence is that of Holliday junction branch migration complex subunit RuvA from Streptococcus pyogenes serotype M28 (strain MGAS6180).